Reading from the N-terminus, the 233-residue chain is Small ribosomal subunit protein uS3 (233 aa).

Positions 39 to 107 (VREFLKAKLK…PVHVNIEEVR (69 aa)) constitute a KH type-2 domain. Positions 209-233 (PGQVSAEPTQPEKKMRKGGRNAAAN) are disordered.

The protein belongs to the universal ribosomal protein uS3 family. Part of the 30S ribosomal subunit. Forms a tight complex with proteins S10 and S14.

Functionally, binds the lower part of the 30S subunit head. Binds mRNA in the 70S ribosome, positioning it for translation. The sequence is that of Small ribosomal subunit protein uS3 from Laribacter hongkongensis (strain HLHK9).